A 153-amino-acid chain; its full sequence is Endoribonuclease YbeY (153 aa).

Residues His-116, His-120, and His-126 each coordinate Zn(2+).

The protein belongs to the endoribonuclease YbeY family. Requires Zn(2+) as cofactor.

Its subcellular location is the cytoplasm. In terms of biological role, single strand-specific metallo-endoribonuclease involved in late-stage 70S ribosome quality control and in maturation of the 3' terminus of the 16S rRNA. In Paraburkholderia phymatum (strain DSM 17167 / CIP 108236 / LMG 21445 / STM815) (Burkholderia phymatum), this protein is Endoribonuclease YbeY.